The following is a 206-amino-acid chain: Thymidylate kinase (206 aa).

10-17 (GVDGVGKT) is a binding site for ATP.

The protein belongs to the thymidylate kinase family.

The catalysed reaction is dTMP + ATP = dTDP + ADP. In terms of biological role, phosphorylation of dTMP to form dTDP in both de novo and salvage pathways of dTTP synthesis. This chain is Thymidylate kinase, found in Bifidobacterium longum (strain NCC 2705).